Reading from the N-terminus, the 277-residue chain is NH(3)-dependent NAD(+) synthetase (277 aa).

Residue 36-43 coordinates ATP; sequence GLSGGIDS. Asp-42 serves as a coordination point for Mg(2+). A deamido-NAD(+)-binding site is contributed by Arg-118. Residue Thr-138 coordinates ATP. A Mg(2+)-binding site is contributed by Glu-143. ATP-binding residues include Lys-167 and Ser-189.

It belongs to the NAD synthetase family. Homodimer.

The catalysed reaction is deamido-NAD(+) + NH4(+) + ATP = AMP + diphosphate + NAD(+) + H(+). The protein operates within cofactor biosynthesis; NAD(+) biosynthesis; NAD(+) from deamido-NAD(+) (ammonia route): step 1/1. In terms of biological role, catalyzes the ATP-dependent amidation of deamido-NAD to form NAD. Uses ammonia as a nitrogen source. The chain is NH(3)-dependent NAD(+) synthetase from Chlorobium phaeobacteroides (strain DSM 266 / SMG 266 / 2430).